Here is a 201-residue protein sequence, read N- to C-terminus: B-cell CLL/lymphoma 7 protein family member B-B (201 aa).

Residues 104 to 201 (QSNTKVDSSS…VCTEHNSTVS (98 aa)) form a disordered region.

Belongs to the BCL7 family.

This chain is B-cell CLL/lymphoma 7 protein family member B-B, found in Danio rerio (Zebrafish).